A 207-amino-acid polypeptide reads, in one-letter code: Large ribosomal subunit protein uL4 (207 aa).

A disordered region spans residues 53 to 76; it reads NRSAVRGGGRKPWRQKGTGRARQG. Positions 60 to 71 are enriched in basic residues; it reads GGRKPWRQKGTG.

It belongs to the universal ribosomal protein uL4 family. Part of the 50S ribosomal subunit.

In terms of biological role, one of the primary rRNA binding proteins, this protein initially binds near the 5'-end of the 23S rRNA. It is important during the early stages of 50S assembly. It makes multiple contacts with different domains of the 23S rRNA in the assembled 50S subunit and ribosome. Its function is as follows. Forms part of the polypeptide exit tunnel. The chain is Large ribosomal subunit protein uL4 from Staphylococcus saprophyticus subsp. saprophyticus (strain ATCC 15305 / DSM 20229 / NCIMB 8711 / NCTC 7292 / S-41).